We begin with the raw amino-acid sequence, 378 residues long: Probable dihydroorotase-like protein (378 aa).

Belongs to the metallo-dependent hydrolases superfamily. DHOase family. PyrC' subfamily.

Non-functional DHOase. This is Probable dihydroorotase-like protein (pyrC') from Helicobacter pylori (strain J99 / ATCC 700824) (Campylobacter pylori J99).